Reading from the N-terminus, the 299-residue chain is Protein FAM228A (299 aa).

Residues 135–201 (AKGTSYQHGR…GRNRYKGASS (67 aa)) form a disordered region. Basic and acidic residues predominate over residues 146-159 (KTHDTQKEAKETEK). The residue at position 264 (Ser264) is a Phosphoserine.

It belongs to the FAM228 family.

In Mus musculus (Mouse), this protein is Protein FAM228A (Fam228a).